Reading from the N-terminus, the 188-residue chain is Photosystem I assembly protein Ycf4 (188 aa).

The next 2 membrane-spanning stretches (helical) occupy residues tyrosine 26–serine 46 and leucine 68–isoleucine 88.

The protein belongs to the Ycf4 family.

The protein localises to the cellular thylakoid membrane. In terms of biological role, seems to be required for the assembly of the photosystem I complex. This is Photosystem I assembly protein Ycf4 from Synechococcus sp. (strain ATCC 27144 / PCC 6301 / SAUG 1402/1) (Anacystis nidulans).